Here is a 190-residue protein sequence, read N- to C-terminus: Somatotropin (190 aa).

The signal sequence occupies residues 1–17; the sequence is MNRVILLLSVMCVGVSS. 2 disulfides stabilise this stretch: Cys69–Cys163 and Cys180–Cys188.

It belongs to the somatotropin/prolactin family.

The protein resides in the secreted. In terms of biological role, growth hormone plays an important role in growth control and is involved in the regulation of several anabolic processes. Implicated as an osmoregulatory substance important for seawater adaptation. The chain is Somatotropin (gh) from Paralichthys olivaceus (Bastard halibut).